A 366-amino-acid chain; its full sequence is MAGPRVEVDGSIMEGGGQILRVSTALSCLLGLPLRVQKIRAGRSTPGLRPQHLSGLEMIRDLCDGRLEGAEIGSTEITFTPEKIKGGIHTADTKTAGSVCLLMQVSMPCVLFAASPSELHLKGGTNAEMAPQIDYTVMVFKPIVEKFGFRFNCDIKTRGYYPKGGGEVIVRMSPVKQLNPINLTDRGCVTKIYGRAFVAGVLPFKVAKDMAAAAVRCIRKEIRDLYVNIQPVQEPKDQAFGNGNGIIIIAETSTGCLFAGSSLGKRGVNADKVGIEAAEMLLANLRHGGTVDEYLQDQLIVFMALANGVSRIKTGPVTLHTQTAIHFAEQIAKAKFIVKKSEDEEDASKDTYIIECQGIGMTNPNL.

ATP is bound by residues glutamine 104, proline 131, tyrosine 294, aspartate 297, glutamine 298, and histidine 320. The active-site Tele-AMP-histidine intermediate is the histidine 320.

The protein belongs to the RNA 3'-terminal cyclase family. Type 1 subfamily.

The protein localises to the nucleus. Its subcellular location is the nucleoplasm. It carries out the reaction a 3'-end 3'-phospho-ribonucleotide-RNA + ATP = a 3'-end 2',3'-cyclophospho-ribonucleotide-RNA + AMP + diphosphate. In terms of biological role, catalyzes the conversion of 3'-phosphate to a 2',3'-cyclic phosphodiester at the end of RNA. The mechanism of action of the enzyme occurs in 3 steps: (A) adenylation of the enzyme by ATP; (B) transfer of adenylate to an RNA-N3'P to produce RNA-N3'PP5'A; (C) and attack of the adjacent 2'-hydroxyl on the 3'-phosphorus in the diester linkage to produce the cyclic end product. Likely functions in some aspects of cellular RNA processing. Function plays an important role in regulating axon regeneration by inhibiting central nervous system (CNS) axon regeneration following optic nerve injury. In Macaca fascicularis (Crab-eating macaque), this protein is RNA 3'-terminal phosphate cyclase (RTCA).